A 381-amino-acid polypeptide reads, in one-letter code: Cytochrome b (381 aa).

4 helical membrane passes run F34–M54, W78–I99, W114–L134, and F179–L199. Positions 84 and 98 each coordinate heme b. Positions 183 and 197 each coordinate heme b. H202 contributes to the a ubiquinone binding site. 4 consecutive transmembrane segments (helical) span residues Y227–L247, L289–H309, M321–G341, and F348–P368.

Belongs to the cytochrome b family. In terms of assembly, the cytochrome bc1 complex contains 3 respiratory subunits (MT-CYB, CYC1 and UQCRFS1), 2 core proteins (UQCRC1 and UQCRC2) and probably 6 low-molecular weight proteins. Requires heme b as cofactor.

Its subcellular location is the mitochondrion inner membrane. Component of the ubiquinol-cytochrome c reductase complex (complex III or cytochrome b-c1 complex) that is part of the mitochondrial respiratory chain. The b-c1 complex mediates electron transfer from ubiquinol to cytochrome c. Contributes to the generation of a proton gradient across the mitochondrial membrane that is then used for ATP synthesis. The protein is Cytochrome b (mt-cyb) of Squalus acanthias (Spiny dogfish).